The chain runs to 301 residues: Ornithine carbamoyltransferase (301 aa).

Carbamoyl phosphate contacts are provided by residues arginine 100 and 127–130 (HPCQ). L-ornithine contacts are provided by residues asparagine 158, aspartate 221, and 225 to 226 (SM). Residues cysteine 260 and arginine 288 each coordinate carbamoyl phosphate.

The protein belongs to the aspartate/ornithine carbamoyltransferase superfamily. OTCase family.

It localises to the cytoplasm. The enzyme catalyses carbamoyl phosphate + L-ornithine = L-citrulline + phosphate + H(+). Its pathway is amino-acid biosynthesis; L-arginine biosynthesis; L-arginine from L-ornithine and carbamoyl phosphate: step 1/3. Reversibly catalyzes the transfer of the carbamoyl group from carbamoyl phosphate (CP) to the N(epsilon) atom of ornithine (ORN) to produce L-citrulline. The protein is Ornithine carbamoyltransferase (argF) of Vibrio sp. (strain 2693).